The primary structure comprises 1332 residues: DNA-directed RNA polymerase subunit beta' (1332 aa).

Zn(2+) contacts are provided by cysteine 60, cysteine 62, cysteine 75, and cysteine 78. Aspartate 535, aspartate 537, and aspartate 539 together coordinate Mg(2+). Residues cysteine 894, cysteine 977, cysteine 984, and cysteine 987 each coordinate Zn(2+).

It belongs to the RNA polymerase beta' chain family. In terms of assembly, the RNAP catalytic core consists of 2 alpha, 1 beta, 1 beta' and 1 omega subunit. When a sigma factor is associated with the core the holoenzyme is formed, which can initiate transcription. Mg(2+) serves as cofactor. Requires Zn(2+) as cofactor.

It carries out the reaction RNA(n) + a ribonucleoside 5'-triphosphate = RNA(n+1) + diphosphate. Its function is as follows. DNA-dependent RNA polymerase catalyzes the transcription of DNA into RNA using the four ribonucleoside triphosphates as substrates. This is DNA-directed RNA polymerase subunit beta' from Corynebacterium kroppenstedtii (strain DSM 44385 / JCM 11950 / CIP 105744 / CCUG 35717).